Here is a 300-residue protein sequence, read N- to C-terminus: Glutamyl-Q tRNA(Asp) synthetase (300 aa).

Residues 8–12 (RFAPT) and Asp-44 contribute to the L-glutamate site. A 'HIGH' region motif is present at residues 11-21 (PTPSGDLHLGS). The Zn(2+) site is built by Cys-100, Cys-102, Tyr-122, and Cys-126. Tyr-181 and Arg-199 together coordinate L-glutamate. Positions 237-241 (KLSKQ) match the 'KMSKS' region motif. Lys-240 serves as a coordination point for ATP.

It belongs to the class-I aminoacyl-tRNA synthetase family. GluQ subfamily. Requires Zn(2+) as cofactor.

Functionally, catalyzes the tRNA-independent activation of glutamate in presence of ATP and the subsequent transfer of glutamate onto a tRNA(Asp). Glutamate is transferred on the 2-amino-5-(4,5-dihydroxy-2-cyclopenten-1-yl) moiety of the queuosine in the wobble position of the QUC anticodon. This chain is Glutamyl-Q tRNA(Asp) synthetase, found in Synechococcus sp. (strain ATCC 27144 / PCC 6301 / SAUG 1402/1) (Anacystis nidulans).